The sequence spans 181 residues: NAD(P)H-quinone oxidoreductase subunit I, chloroplastic (181 aa).

2 4Fe-4S ferredoxin-type domains span residues 55–84 (GRIH…VDWE) and 95–124 (KSYS…MTEE). 8 residues coordinate [4Fe-4S] cluster: Cys-64, Cys-67, Cys-70, Cys-74, Cys-104, Cys-107, Cys-110, and Cys-114.

This sequence belongs to the complex I 23 kDa subunit family. NDH is composed of at least 16 different subunits, 5 of which are encoded in the nucleus. The cofactor is [4Fe-4S] cluster.

Its subcellular location is the plastid. The protein resides in the chloroplast thylakoid membrane. It catalyses the reaction a plastoquinone + NADH + (n+1) H(+)(in) = a plastoquinol + NAD(+) + n H(+)(out). It carries out the reaction a plastoquinone + NADPH + (n+1) H(+)(in) = a plastoquinol + NADP(+) + n H(+)(out). NDH shuttles electrons from NAD(P)H:plastoquinone, via FMN and iron-sulfur (Fe-S) centers, to quinones in the photosynthetic chain and possibly in a chloroplast respiratory chain. The immediate electron acceptor for the enzyme in this species is believed to be plastoquinone. Couples the redox reaction to proton translocation, and thus conserves the redox energy in a proton gradient. This Physcomitrium patens (Spreading-leaved earth moss) protein is NAD(P)H-quinone oxidoreductase subunit I, chloroplastic.